The following is a 419-amino-acid chain: Glycine, glutamate and proline-rich protein (419 aa).

The signal sequence occupies residues 1–16; it reads MKCLVALFLSLSLVAC. The tract at residues 74-152 is disordered; the sequence is VERESEEAEG…VDMCAGESRR (79 aa). The span at 76–85 shows a compositional bias: acidic residues; the sequence is RESEEAEGEG. Residues 86–130 are compositionally biased toward basic and acidic residues; it reads TDGRGGGEGEREGWGGEREGGEGEREGGEGEREGREGEREGKSSE.

It in the C-terminal section; belongs to the glycosyl hydrolase 23 family. As to expression, component of the acid-insoluble organic matrix of calcified layers of the shell (at protein level).

Its subcellular location is the secreted. The sequence is that of Glycine, glutamate and proline-rich protein from Lottia gigantea (Giant owl limpet).